A 299-amino-acid chain; its full sequence is GTPase Era (299 aa).

The region spanning 8–176 (RCGYVAIVGR…EKLVGERLPE (169 aa)) is the Era-type G domain. Residues 16 to 23 (GRPNVGKS) form a G1 region. Position 16-23 (16-23 (GRPNVGKS)) interacts with GTP. A G2 region spans residues 42 to 46 (QTTRH). Positions 63 to 66 (DTPG) are G3. GTP is bound by residues 63–67 (DTPGL) and 125–128 (NKAD). The interval 125–128 (NKAD) is G4. Residues 155–157 (ISA) form a G5 region. In terms of domain architecture, KH type-2 spans 199 to 283 (IREKIMRQLG…MLNLWVKVKG (85 aa)).

The protein belongs to the TRAFAC class TrmE-Era-EngA-EngB-Septin-like GTPase superfamily. Era GTPase family. In terms of assembly, monomer.

The protein resides in the cytoplasm. The protein localises to the cell inner membrane. Its function is as follows. An essential GTPase that binds both GDP and GTP, with rapid nucleotide exchange. Plays a role in 16S rRNA processing and 30S ribosomal subunit biogenesis and possibly also in cell cycle regulation and energy metabolism. The sequence is that of GTPase Era from Ectopseudomonas mendocina (strain ymp) (Pseudomonas mendocina).